A 182-amino-acid chain; its full sequence is CASP-like protein 2B1 (182 aa).

Residues 1 to 12 (MKLIDRRMRLTE) lie on the Cytoplasmic side of the membrane. The helical transmembrane segment at 13-31 (LLLRCSISVFALLALILVV) threads the bilayer. Residues 32 to 52 (TDTEVKLIFTIKKTAKYTDMK) are Extracellular-facing. Residues 53 to 73 (AVVFLVVANGIAAVYSLLQSV) form a helical membrane-spanning segment. The Cytoplasmic portion of the chain corresponds to 74 to 89 (RCVVGTMKGKVLFSKP). The helical transmembrane segment at 90 to 110 (LAWAFFSGDQAMAYLNVAAIA) threads the bilayer. Over 111 to 141 (ATAESGVIAREGEEDLQWMRVCTMYGKFCNQ) the chain is Extracellular. The helical transmembrane segment at 142-162 (MAIGVSSALLASIAMVFVSCI) threads the bilayer. Residues 163–182 (SAFSLFRLYGATKDRRTTPW) lie on the Cytoplasmic side of the membrane.

This sequence belongs to the Casparian strip membrane proteins (CASP) family. In terms of assembly, homodimer and heterodimers.

The protein resides in the cell membrane. The polypeptide is CASP-like protein 2B1 (Arabidopsis thaliana (Mouse-ear cress)).